We begin with the raw amino-acid sequence, 366 residues long: Peptide chain release factor 2 (366 aa).

Position 251 is an N5-methylglutamine (glutamine 251).

The protein belongs to the prokaryotic/mitochondrial release factor family. Methylated by PrmC. Methylation increases the termination efficiency of RF2.

Its subcellular location is the cytoplasm. In terms of biological role, peptide chain release factor 2 directs the termination of translation in response to the peptide chain termination codons UGA and UAA. The polypeptide is Peptide chain release factor 2 (Campylobacter lari (strain RM2100 / D67 / ATCC BAA-1060)).